Reading from the N-terminus, the 193-residue chain is Ion-translocating oxidoreductase complex subunit A (193 aa).

Helical transmembrane passes span 5–25 (LLLL…FLGL), 39–59 (IGMG…SYLM), 63–83 (ILIP…VIAV), 102–122 (LLGI…VALL), 134–154 (IIYG…FAAM), and 171–191 (SIAM…TGLI).

The protein belongs to the NqrDE/RnfAE family. The complex is composed of six subunits: RnfA, RnfB, RnfC, RnfD, RnfE and RnfG.

Its subcellular location is the cell inner membrane. Part of a membrane-bound complex that couples electron transfer with translocation of ions across the membrane. The sequence is that of Ion-translocating oxidoreductase complex subunit A from Aeromonas hydrophila subsp. hydrophila (strain ATCC 7966 / DSM 30187 / BCRC 13018 / CCUG 14551 / JCM 1027 / KCTC 2358 / NCIMB 9240 / NCTC 8049).